The sequence spans 286 residues: Phosphoribosylaminoimidazole-succinocarboxamide synthase (286 aa).

The protein belongs to the SAICAR synthetase family.

The catalysed reaction is 5-amino-1-(5-phospho-D-ribosyl)imidazole-4-carboxylate + L-aspartate + ATP = (2S)-2-[5-amino-1-(5-phospho-beta-D-ribosyl)imidazole-4-carboxamido]succinate + ADP + phosphate + 2 H(+). Its pathway is purine metabolism; IMP biosynthesis via de novo pathway; 5-amino-1-(5-phospho-D-ribosyl)imidazole-4-carboxamide from 5-amino-1-(5-phospho-D-ribosyl)imidazole-4-carboxylate: step 1/2. The polypeptide is Phosphoribosylaminoimidazole-succinocarboxamide synthase (Actinobacillus succinogenes (strain ATCC 55618 / DSM 22257 / CCUG 43843 / 130Z)).